The sequence spans 476 residues: Bifunctional protein HldE (476 aa).

The ribokinase stretch occupies residues 1–318 (MKPILPDYNS…AEAVHGSQDT (318 aa)). 195 to 198 (NMKE) serves as a coordination point for ATP. The active site involves D264. The interval 344–476 (MTNGCFDILH…IINAIKGGKG (133 aa)) is cytidylyltransferase.

It in the N-terminal section; belongs to the carbohydrate kinase PfkB family. The protein in the C-terminal section; belongs to the cytidylyltransferase family. In terms of assembly, homodimer.

The catalysed reaction is D-glycero-beta-D-manno-heptose 7-phosphate + ATP = D-glycero-beta-D-manno-heptose 1,7-bisphosphate + ADP + H(+). It carries out the reaction D-glycero-beta-D-manno-heptose 1-phosphate + ATP + H(+) = ADP-D-glycero-beta-D-manno-heptose + diphosphate. It participates in nucleotide-sugar biosynthesis; ADP-L-glycero-beta-D-manno-heptose biosynthesis; ADP-L-glycero-beta-D-manno-heptose from D-glycero-beta-D-manno-heptose 7-phosphate: step 1/4. Its pathway is nucleotide-sugar biosynthesis; ADP-L-glycero-beta-D-manno-heptose biosynthesis; ADP-L-glycero-beta-D-manno-heptose from D-glycero-beta-D-manno-heptose 7-phosphate: step 3/4. The protein operates within bacterial outer membrane biogenesis; LPS core biosynthesis. Its function is as follows. Catalyzes the phosphorylation of D-glycero-D-manno-heptose 7-phosphate at the C-1 position to selectively form D-glycero-beta-D-manno-heptose-1,7-bisphosphate. In terms of biological role, catalyzes the ADP transfer from ATP to D-glycero-beta-D-manno-heptose 1-phosphate, yielding ADP-D-glycero-beta-D-manno-heptose. The sequence is that of Bifunctional protein HldE from Vibrio parahaemolyticus serotype O3:K6 (strain RIMD 2210633).